The following is a 317-amino-acid chain: Pantothenate kinase (317 aa).

99–106 (GSVSVGKS) contributes to the ATP binding site.

The protein belongs to the prokaryotic pantothenate kinase family.

Its subcellular location is the cytoplasm. The enzyme catalyses (R)-pantothenate + ATP = (R)-4'-phosphopantothenate + ADP + H(+). Its pathway is cofactor biosynthesis; coenzyme A biosynthesis; CoA from (R)-pantothenate: step 1/5. In Histophilus somni (strain 2336) (Haemophilus somnus), this protein is Pantothenate kinase.